We begin with the raw amino-acid sequence, 773 residues long: Cadherin-5 (773 aa).

Residues 1-18 (MKKLILLFSLFLAPAFSY) form the signal peptide. A propeptide spanning residues 19-40 (KENQKINQNFSSNNTSHKRLKR) is cleaved from the precursor. N-linked (GlcNAc...) asparagine glycosylation is found at asparagine 27, asparagine 31, and asparagine 32. 5 consecutive Cadherin domains span residues 39–144 (KRDW…APIF), 145–251 (VQKI…FPVF), 252–366 (KHPS…PPVF), 367–474 (TKLS…APEL), and 474–582 (LVYP…DFTF). Topologically, residues 41 to 595 (DWIWNRMHIR…RAKQVGVSVQ (555 aa)) are extracellular. The Ca(2+) site is built by glutamate 51, glutamate 52, aspartate 102, and glutamate 104. Asparagine 121 carries an N-linked (GlcNAc...) asparagine glycan. Residues aspartate 136, isoleucine 137, asparagine 138, aspartate 139, and asparagine 140 each contribute to the Ca(2+) site. Residue asparagine 150 is glycosylated (N-linked (GlcNAc...) asparagine). Ca(2+) is bound by residues aspartate 170, aspartate 172, histidine 179, and aspartate 224. N-linked (GlcNAc...) asparagine glycosylation is found at asparagine 263, asparagine 437, asparagine 519, and asparagine 531. Residues 596–617 (ALVAIFICIFTIIAVIALLILL) form a helical membrane-spanning segment. Topologically, residues 618-773 (RKRHKKDLSG…GSEPNEDFVY (156 aa)) are cytoplasmic.

N-glycosylated. In terms of processing, O-glycosylated.

The protein resides in the cell junction. Its subcellular location is the adherens junction. It is found in the cell membrane. It localises to the cytoplasm. Its function is as follows. Cadherins are calcium-dependent cell adhesion proteins. They preferentially interact with themselves in a homophilic manner in connecting cells; cadherins may thus contribute to the sorting of heterogeneous cell types. This cadherin may play a important role in endothelial cell biology through control of the cohesion and organization of the intercellular junctions. Plays a role in coupling actin fibers to cell junctions in endothelial cells. Associates with CTNND1/p120-catenin to control CADH5 endocytosis. This is Cadherin-5 from Gallus gallus (Chicken).